The chain runs to 419 residues: UDP-N-acetylglucosamine 1-carboxyvinyltransferase (419 aa).

22 to 23 lines the phosphoenolpyruvate pocket; sequence KN. Arg-91 contributes to the UDP-N-acetyl-alpha-D-glucosamine binding site. Cys-115 functions as the Proton donor in the catalytic mechanism. Residue Cys-115 is modified to 2-(S-cysteinyl)pyruvic acid O-phosphothioketal. Residues 120-124, 160-163, Asp-305, and Val-327 each bind UDP-N-acetyl-alpha-D-glucosamine; these read RPVDL and KVSV.

Belongs to the EPSP synthase family. MurA subfamily.

The protein localises to the cytoplasm. The enzyme catalyses phosphoenolpyruvate + UDP-N-acetyl-alpha-D-glucosamine = UDP-N-acetyl-3-O-(1-carboxyvinyl)-alpha-D-glucosamine + phosphate. It participates in cell wall biogenesis; peptidoglycan biosynthesis. Cell wall formation. Adds enolpyruvyl to UDP-N-acetylglucosamine. The chain is UDP-N-acetylglucosamine 1-carboxyvinyltransferase from Salmonella arizonae (strain ATCC BAA-731 / CDC346-86 / RSK2980).